We begin with the raw amino-acid sequence, 197 residues long: 5'-deoxynucleotidase YPTB2590 (197 aa).

Substrate-binding positions include arginine 16–tryptophan 17 and histidine 31. One can recognise an HD domain in the interval valine 28 to tyrosine 140. A divalent metal cation-binding residues include histidine 31, histidine 66, and aspartate 67. Substrate contacts are provided by residues aspartate 67, aspartate 75–threonine 78, and aspartate 135. Aspartate 135 lines the a divalent metal cation pocket.

The protein belongs to the 5DNU family. As to quaternary structure, homodimer. Requires a divalent metal cation as cofactor.

The protein localises to the cytoplasm. It catalyses the reaction a 2'-deoxyribonucleoside 5'-phosphate + H2O = a 2'-deoxyribonucleoside + phosphate. Its function is as follows. Catalyzes the strictly specific dephosphorylation of 2'-deoxyribonucleoside 5'-monophosphates. This chain is 5'-deoxynucleotidase YPTB2590, found in Yersinia pseudotuberculosis serotype I (strain IP32953).